Consider the following 287-residue polypeptide: tRNA-cytidine(32) 2-sulfurtransferase (287 aa).

A PP-loop motif motif is present at residues S58 to S63. Residues C133, C136, and C224 each contribute to the [4Fe-4S] cluster site.

This sequence belongs to the TtcA family. As to quaternary structure, homodimer. Mg(2+) serves as cofactor. [4Fe-4S] cluster is required as a cofactor.

The protein localises to the cytoplasm. It carries out the reaction cytidine(32) in tRNA + S-sulfanyl-L-cysteinyl-[cysteine desulfurase] + AH2 + ATP = 2-thiocytidine(32) in tRNA + L-cysteinyl-[cysteine desulfurase] + A + AMP + diphosphate + H(+). Its pathway is tRNA modification. In terms of biological role, catalyzes the ATP-dependent 2-thiolation of cytidine in position 32 of tRNA, to form 2-thiocytidine (s(2)C32). The sulfur atoms are provided by the cysteine/cysteine desulfurase (IscS) system. This is tRNA-cytidine(32) 2-sulfurtransferase from Dinoroseobacter shibae (strain DSM 16493 / NCIMB 14021 / DFL 12).